Consider the following 429-residue polypeptide: Adenylosuccinate synthetase (429 aa).

GTP contacts are provided by residues 12–18 (GDEGKGK) and 40–42 (GHT). The active-site Proton acceptor is the Asp-13. Mg(2+)-binding residues include Asp-13 and Gly-40. IMP is bound by residues 13–16 (DEGK), 38–41 (NAGH), Thr-129, Arg-143, Gln-223, Thr-238, and Arg-302. Residue His-41 is the Proton donor of the active site. A substrate-binding site is contributed by 298–304 (TVTGRKR). Residues Arg-304, 330-332 (KLD), and 412-414 (STS) contribute to the GTP site.

The protein belongs to the adenylosuccinate synthetase family. As to quaternary structure, homodimer. Mg(2+) is required as a cofactor.

Its subcellular location is the cytoplasm. The catalysed reaction is IMP + L-aspartate + GTP = N(6)-(1,2-dicarboxyethyl)-AMP + GDP + phosphate + 2 H(+). It participates in purine metabolism; AMP biosynthesis via de novo pathway; AMP from IMP: step 1/2. Functionally, plays an important role in the de novo pathway of purine nucleotide biosynthesis. Catalyzes the first committed step in the biosynthesis of AMP from IMP. This is Adenylosuccinate synthetase from Rhizorhabdus wittichii (strain DSM 6014 / CCUG 31198 / JCM 15750 / NBRC 105917 / EY 4224 / RW1) (Sphingomonas wittichii).